The following is a 403-amino-acid chain: Ribosomal RNA large subunit methyltransferase I (403 aa).

The 80-residue stretch at 9 to 88 (YPRLILSKGR…ESIDIAFFTR (80 aa)) folds into the PUA domain.

The protein belongs to the methyltransferase superfamily. RlmI family.

Its subcellular location is the cytoplasm. The enzyme catalyses cytidine(1962) in 23S rRNA + S-adenosyl-L-methionine = 5-methylcytidine(1962) in 23S rRNA + S-adenosyl-L-homocysteine + H(+). In terms of biological role, specifically methylates the cytosine at position 1962 (m5C1962) of 23S rRNA. The chain is Ribosomal RNA large subunit methyltransferase I from Salmonella paratyphi C (strain RKS4594).